We begin with the raw amino-acid sequence, 292 residues long: Probable 2-(5''-triphosphoribosyl)-3'-dephosphocoenzyme-A synthase (292 aa).

It belongs to the CitG/MdcB family.

The catalysed reaction is 3'-dephospho-CoA + ATP = 2'-(5''-triphospho-alpha-D-ribosyl)-3'-dephospho-CoA + adenine. In Shigella boydii serotype 18 (strain CDC 3083-94 / BS512), this protein is Probable 2-(5''-triphosphoribosyl)-3'-dephosphocoenzyme-A synthase.